A 302-amino-acid polypeptide reads, in one-letter code: MPSVKETLTLLLSQAFLATGSPVDGETVVKRQCPAIHVFGARETTVSQGYGSSATVVNLVIQAHPGTTSEAIVYPACGGQASCGGISYANSVVNGTNAAAAAINNFHNSCPDTQLVLVGYSQGAQIFDNALCGGGDPGEGITNTAVPLTAGAVSAVKAAIFMGDPRNIHGLPYNVGTCTTQGFDARPAGFVCPSASKIKSYCDAADPYCCTGNDPNVHQGYGQEYGQQALAFINSQLSSGGSQPPGGGPTSTSRPTSTRTGSSPGPTQTHWGQCGGQGWTGPTQCESGTTCQVISQWYSQCL.

An N-terminal signal peptide occupies residues 1 to 20 (MPSVKETLTLLLSQAFLATG). The propeptide occupies 21 to 31 (SPVDGETVVKR). Position 32 is a pyrrolidone carboxylic acid (Gln-32). Asn-94 is a glycosylation site (N-linked (GlcNAc...) asparagine). The active site involves Ser-121. Residues 236 to 273 (QLSSGGSQPPGGGPTSTSRPTSTRTGSSPGPTQTHWGQ) form a disordered region. Residues 244–266 (PPGGGPTSTSRPTSTRTGSSPGP) form a linker region. Over residues 250 to 269 (TSTSRPTSTRTGSSPGPTQT) the composition is skewed to low complexity. Positions 266–302 (PTQTHWGQCGGQGWTGPTQCESGTTCQVISQWYSQCL) constitute a CBM1 domain. Cystine bridges form between Cys-274-Cys-291 and Cys-285-Cys-301.

It belongs to the cutinase family. Acetylxylan esterase subfamily. Monomer. Post-translationally, glycosylated.

Its subcellular location is the secreted. The catalysed reaction is Deacetylation of xylans and xylo-oligosaccharides.. It participates in glycan degradation; xylan degradation. With respect to regulation, inhibited by phenylmethylsulfonyl flouride. Its function is as follows. Degrades acetylated xylans by cleaving acetyl side groups from the hetero-xylan backbone. This is Acetylxylan esterase (axe1) from Hypocrea jecorina (Trichoderma reesei).